Reading from the N-terminus, the 1377-residue chain is DNA-directed RNA polymerase subunit beta' (1377 aa).

Zn(2+) contacts are provided by Cys-60, Cys-62, Cys-75, and Cys-78. Asp-449, Asp-451, and Asp-453 together coordinate Mg(2+). Zn(2+) is bound by residues Cys-777, Cys-851, Cys-858, and Cys-861.

The protein belongs to the RNA polymerase beta' chain family. As to quaternary structure, the RNAP catalytic core consists of 2 alpha, 1 beta, 1 beta' and 1 omega subunit. When a sigma factor is associated with the core the holoenzyme is formed, which can initiate transcription. It depends on Mg(2+) as a cofactor. Zn(2+) serves as cofactor.

The enzyme catalyses RNA(n) + a ribonucleoside 5'-triphosphate = RNA(n+1) + diphosphate. DNA-dependent RNA polymerase catalyzes the transcription of DNA into RNA using the four ribonucleoside triphosphates as substrates. The protein is DNA-directed RNA polymerase subunit beta' of Borrelia hermsii (strain HS1 / DAH).